The following is a 149-amino-acid chain: Nucleoside diphosphate kinase (149 aa).

ATP contacts are provided by Lys9, Phe57, Arg85, Thr91, Arg102, and Asn112. Residue His115 is the Pros-phosphohistidine intermediate of the active site.

The protein belongs to the NDK family. The cofactor is Mg(2+).

It is found in the cytoplasm. The enzyme catalyses a 2'-deoxyribonucleoside 5'-diphosphate + ATP = a 2'-deoxyribonucleoside 5'-triphosphate + ADP. The catalysed reaction is a ribonucleoside 5'-diphosphate + ATP = a ribonucleoside 5'-triphosphate + ADP. In terms of biological role, major role in the synthesis of nucleoside triphosphates other than ATP. The ATP gamma phosphate is transferred to the NDP beta phosphate via a ping-pong mechanism, using a phosphorylated active-site intermediate. This chain is Nucleoside diphosphate kinase, found in Methanocorpusculum labreanum (strain ATCC 43576 / DSM 4855 / Z).